Here is a 745-residue protein sequence, read N- to C-terminus: MAGSGGGVVSGGRQRGPPLFATEKPGRMAMAAYRVSAATVFAGVLLIWLYRATHLPPGGGDGVRRWAWLGMLAAELWFGFYWVLTLSVRWCPVYRRTFKDRLAQSYSEDELPSVDIFVCTADPTAEPPMLVISTVLSVMAYDYLPEKLNIYLSDDAGSVLTFYVLCEASEFAKHWIPFCKKYKVEPRSPAAYFAKVASPPDGCGPKEWFTMKELYKDMTDRVNSVVNSGRIPEVPRCHSRGFSQWNENFTSSDHPSIVQILIDSNKQKAVDIDGNALPTLVYMAREKKPQKQHHFKAGSLNALIRVSSVISNSPIIMNVDCDMYSNNSESIRDALCFFLDEEQGQDIGFVQYPQNFENVVHNDIYGHPINVVNELDHPCLDGWGGMCYYGTGCFHRREALCGRIYSQEYKEDWTRVAGRTEDANELEEMGRSLVTCTYEHNTIWGIEKGVRYGCPLEDVTTGLQIQCRGWRSVYYNPKRKGFLGMTPTSLGQILVLYKRWTEGFLQISLSRYSPFLLGHGKIKLGLQMGYSVCGFWAVNSFPTLYYVTIPSLCFLNGISLFPEKTSPWFIPFAYVMVAAYSCSLAESLQCGDSAVEWWNAQRMWLIRRITSYLLATIDTFRRILGISESGFNLTVKVTDLQALERYKKGMMEFGSFSAMFVILTTVALLNLACMVLGISRVLLQEGPGGLETLFLQAVLCVLIVAINSPVYEALFLRRDKGSLPASVARVSICFVLPLCILSICK.

The segment covering 1–14 (MAGSGGGVVSGGRQ) has biased composition (gly residues). Residues 1–20 (MAGSGGGVVSGGRQRGPPLF) form a disordered region. A run of 2 helical transmembrane segments spans residues 29–49 (AMAAYRVSAATVFAGVLLIWL) and 66–86 (WAWLGMLAAELWFGFYWVLTL). Active-site residues include Asp-155 and Asp-458. Transmembrane regions (helical) follow at residues 541–561 (FPTLYYVTIPSLCFLNGISLF), 568–588 (WFIPFAYVMVAAYSCSLAESL), 658–678 (AMFVILTTVALLNLACMVLGI), 686–706 (GPGGLETLFLQAVLCVLIVAI), and 723–743 (LPASVARVSICFVLPLCILSI).

Belongs to the glycosyltransferase 2 family. Plant cellulose synthase-like E subfamily.

The protein localises to the golgi apparatus membrane. Its function is as follows. Thought to be a Golgi-localized beta-glycan synthase that polymerize the backbones of noncellulosic polysaccharides (hemicelluloses) of plant cell wall. This Oryza sativa subsp. japonica (Rice) protein is Cellulose synthase-like protein E2 (CSLE2).